The sequence spans 390 residues: MAMVTGGWGDPGGDTNGVDKAGGSYPRATEDDSASPPGATSDAEPGDEERPGLQVDCVVCGDKSSGKHYGVFTCEGCKSFFKRSIRRNLSYTCRSNRDCQIDQHHRNQCQYCRLKKCFRVGMRKEAVQRGRIPHALPGPAACSPPGATGVEPFTGPPVSELIAQLLRAEPYPAAGRFGGGGAVLGIDNVCELAARLLFSTVEWARHAPFFPELPAADQVALLRLSWSELFVLNAAQAALPLHTAPLLAAAGLHAAPMAAERAVAFMDQVRAFQEQVDKLGRLQVDAAEYGCLKAIALFTPDACGLSDPAHVESLQEKAQVALTEYVRAQYPSQPQRFGRLLLRLPALRAVPASLISQLFFMRLVGKTPIETLIRDMLLSGSTFNWPYGSG.

Residues 1–15 (MAMVTGGWGDPGGDT) show a composition bias toward gly residues. The disordered stretch occupies residues 1 to 50 (MAMVTGGWGDPGGDTNGVDKAGGSYPRATEDDSASPPGATSDAEPGDEER). Phosphoserine occurs at positions 35 and 41. The segment at residues 54–129 (QVDCVVCGDK…VGMRKEAVQR (76 aa)) is a DNA-binding region (nuclear receptor). The segment at 57 to 77 (CVVCGDKSSGKHYGVFTCEGC) adopts an NR C4-type zinc-finger fold. Serine 84 is subject to Phosphoserine. The NR C4-type zinc finger occupies 93–117 (CRSNRDCQIDQHHRNQCQYCRLKKC). In terms of domain architecture, NR LBD spans 157-380 (PVSELIAQLL…TLIRDMLLSG (224 aa)). Residues 314 to 390 (LQEKAQVALT…STFNWPYGSG (77 aa)) form an important for dimerization region.

It belongs to the nuclear hormone receptor family. NR2 subfamily. In terms of assembly, binds DNA as dimer; homodimer and heterodimer with NR2F2 and probably NR2F1. Interacts with THRB.

The protein localises to the nucleus. Its function is as follows. Transcription factor predominantly involved in transcriptional repression. Binds to promoter/enhancer response elements that contain the imperfect 5'-AGGTCA-3' direct or inverted repeats with various spacings which are also recognized by other nuclear hormone receptors. Involved in modulation of hormonal responses. Represses transcriptional activity of the lutropin-choriogonadotropic hormone receptor/LHCGR gene, the renin/REN gene and the oxytocin-neurophysin/OXT gene. Represses the triiodothyronine-dependent and -independent transcriptional activity of the thyroid hormone receptor gene in a cell type-specific manner. The corepressing function towards thyroid hormone receptor beta/THRB involves at least in part the inhibition of THRB binding to triiodothyronine response elements (TREs) by NR2F6. Inhibits NFATC transcription factor DNA binding and subsequently its transcriptional activity. Acts as transcriptional repressor of IL-17 expression in Th-17 differentiated CD4(+) T cells and may be involved in induction and/or maintenance of peripheral immunological tolerance and autoimmunity. Involved in development of forebrain circadian clock; is required early in the development of the locus coeruleus (LC). This Mus musculus (Mouse) protein is Nuclear receptor subfamily 2 group F member 6 (Nr2f6).